A 553-amino-acid chain; its full sequence is Putative transport protein YidE (553 aa).

5 consecutive transmembrane segments (helical) span residues 4-24 (IALT…IGNV), 28-48 (GIGL…HFVS), 65-85 (FGLI…FFAS), 95-115 (LFAV…HKLF), and 158-178 (MSYA…MWML). 2 RCK C-terminal domains span residues 191-276 (QQHE…VIGQ) and 279-361 (DTSL…VLGN). Helical transmembrane passes span 371-391 (MLPV…PVFV), 393-413 (GFPA…ALIL), 439-459 (IVLF…NTLV), 464-484 (LSWI…VGIL), 493-513 (YLTM…LAFA), and 533-553 (LVMF…WSIG).

The protein belongs to the AAE transporter (TC 2.A.81) family. YidE subfamily.

Its subcellular location is the cell membrane. This Shigella boydii serotype 18 (strain CDC 3083-94 / BS512) protein is Putative transport protein YidE.